Here is a 397-residue protein sequence, read N- to C-terminus: N-acetyllactosaminide beta-1,3-N-acetylglucosaminyltransferase 2 (397 aa).

The Cytoplasmic segment spans residues 1–7 (MSVGRRR). Residues 8-28 (VKLLGILMMANVFIYLIVEVS) form a helical; Signal-anchor for type II membrane protein membrane-spanning segment. Residues 29–325 (KNSSQDKNGK…ALRLYSATSR (297 aa)) are Lumenal-facing. Asparagine 30, asparagine 79, asparagine 89, asparagine 127, asparagine 173, and asparagine 219 each carry an N-linked (GlcNAc...) asparagine glycan.

Belongs to the glycosyltransferase 31 family. As to quaternary structure, interacts with B3GNT8; this interaction greatly increases B3GNT2 catalytic activity, independently of B3GNT8 enzymatic activity. The cofactor is Mn(2+). Expressed in heart, brain, lung, kidney and testis and, to a lesser extent, in liver and skeletal muscle. No expression in spleen.

The protein localises to the golgi apparatus membrane. It catalyses the reaction a beta-D-galactosyl-(1-&gt;4)-N-acetyl-beta-D-glucosaminyl derivative + UDP-N-acetyl-alpha-D-glucosamine = an N-acetyl-beta-D-glucosaminyl-(1-&gt;3)-beta-D-galactosyl-(1-&gt;4)-N-acetyl-beta-D-glucosaminyl derivative + UDP + H(+). It functions in the pathway protein modification; protein glycosylation. Its function is as follows. Beta-1,3-N-acetylglucosaminyltransferase involved in the synthesis of poly-N-acetyllactosamine. Catalyzes the initiation and elongation of poly-N-acetyllactosamine chains. Probably constitutes the main polylactosamine synthase. This is N-acetyllactosaminide beta-1,3-N-acetylglucosaminyltransferase 2 (B3GNT2) from Mus musculus (Mouse).